A 129-amino-acid chain; its full sequence is MRITQGCFSFLPDLTDEQITAQVQYCLGKGWAIGVEYTDDPHPRNTYWEMWGNPMFDLKDAKGVMMELEDCRKAHPQDYIRLNAFDSSRGLETVTMSFIVNRPENEPSLRMTRTESNGRSQHYMWETQR.

A disordered region spans residues 109-129 (LRMTRTESNGRSQHYMWETQR).

Belongs to the RuBisCO small chain family. As to quaternary structure, heterohexadecamer of 8 large and 8 small subunits.

In terms of biological role, ruBisCO catalyzes two reactions: the carboxylation of D-ribulose 1,5-bisphosphate, the primary event in carbon dioxide fixation, as well as the oxidative fragmentation of the pentose substrate. Both reactions occur simultaneously and in competition at the same active site. Although the small subunit is not catalytic it is essential for maximal activity. The sequence is that of Ribulose bisphosphate carboxylase small subunit from Rhizobium meliloti (strain 1021) (Ensifer meliloti).